A 426-amino-acid chain; its full sequence is Serine--tRNA ligase (426 aa).

233 to 235 lines the L-serine pocket; the sequence is TAE. Residue 264 to 266 participates in ATP binding; sequence RSE. L-serine is bound at residue glutamate 287. 351-354 contributes to the ATP binding site; the sequence is EISS. Serine 387 is an L-serine binding site.

The protein belongs to the class-II aminoacyl-tRNA synthetase family. Type-1 seryl-tRNA synthetase subfamily. As to quaternary structure, homodimer. The tRNA molecule binds across the dimer.

It localises to the cytoplasm. It catalyses the reaction tRNA(Ser) + L-serine + ATP = L-seryl-tRNA(Ser) + AMP + diphosphate + H(+). It carries out the reaction tRNA(Sec) + L-serine + ATP = L-seryl-tRNA(Sec) + AMP + diphosphate + H(+). It participates in aminoacyl-tRNA biosynthesis; selenocysteinyl-tRNA(Sec) biosynthesis; L-seryl-tRNA(Sec) from L-serine and tRNA(Sec): step 1/1. Catalyzes the attachment of serine to tRNA(Ser). Is also able to aminoacylate tRNA(Sec) with serine, to form the misacylated tRNA L-seryl-tRNA(Sec), which will be further converted into selenocysteinyl-tRNA(Sec). This is Serine--tRNA ligase from Azotobacter vinelandii (strain DJ / ATCC BAA-1303).